A 1181-amino-acid chain; its full sequence is Protein P1-P2 (1181 aa).

Residues 1-33 (MASFLKPVNSQGLWLSLLLAITYLFLLPSAGQS) form the signal peptide. A run of 4 helical transmembrane segments spans residues 172–192 (LIEF…VYVA), 194–214 (AVPG…WAWP), 218–235 (ASSL…IGFL), and 240–260 (IGLI…WSLL). A Peptidase S39 domain is found at 318–515 (IPGVQIKKLR…SSSPKFTGCE (198 aa)). Catalysis depends on for protease activity residues histidine 366, aspartate 396, and serine 465. The tract at residues 572-688 (GLWADDTEDD…SCESSPHRPT (117 aa)) is disordered. Composition is skewed to basic and acidic residues over residues 598-608 (GETKSSEDPLP) and 638-648 (EESRQPQEEKG). Positions 649–677 (QSCQEDSLNSTQEIQGQSTHFVPSSGTGR) are enriched in polar residues. The RdRp catalytic domain occupies 979 to 1094 (RYLTPTDCSG…SVGSDLSQYA (116 aa)).

It belongs to the luteoviruses RNA polymerase family. Post-translationally, specific enzymatic cleavages in vivo yield mature proteins. The protease probably cleaves itself and releases the RdRp (Potential). Cleavages have been shown in the P1 protein, but since the N-terminus containing the serine protease is shared between P1 and P1-P2, cleavages should also occur within the P1-P2 protein.

The protein localises to the membrane. The enzyme catalyses RNA(n) + a ribonucleoside 5'-triphosphate = RNA(n+1) + diphosphate. RNA-dependent RNA polymerase that plays an essential role in virus replication. In Cicer arietinum (Chickpea), this protein is Protein P1-P2.